The chain runs to 225 residues: Sodium-dependent neutral amino acid transporter SLC6A17 (225 aa).

3 helical membrane passes run 1–8 (NVWRFPYL), 16–35 (AYLV…LFFL), and 60–80 (GIGF…NVII). Topologically, residues 81–143 (GWSIFYFFKS…NSISESGGLN (63 aa)) are extracellular. An N-linked (GlcNAc...) asparagine glycan is attached at Asn-105. The next 3 membrane-spanning stretches (helical) occupy residues 144 to 162 (WKMT…MAVV), 171 to 188 (VMYF…CFLV), and 224 to 225 (IF).

Belongs to the sodium:neurotransmitter symporter (SNF) (TC 2.A.22) family.

The protein resides in the cytoplasmic vesicle. Its subcellular location is the secretory vesicle. The protein localises to the synaptic vesicle membrane. It is found in the postsynapse. It localises to the presynapse. The enzyme catalyses L-proline(in) + Na(+)(in) = L-proline(out) + Na(+)(out). It catalyses the reaction L-leucine(in) + Na(+)(in) = L-leucine(out) + Na(+)(out). It carries out the reaction glycine(in) + Na(+)(in) = glycine(out) + Na(+)(out). The catalysed reaction is L-alanine(in) + Na(+)(in) = L-alanine(out) + Na(+)(out). The enzyme catalyses L-glutamine(in) + Na(+)(in) = L-glutamine(out) + Na(+)(out). In terms of biological role, synaptic vesicle transporter with apparent selectivity for neutral amino acids. The transport is sodium-coupled but chloride-independent, likely driven by the proton electrochemical gradient generated by vacuolar H(+)-ATPase in an overall electrogenic mechanism. May contribute to the synaptic uptake of neurotransmitter precursors in a process coupled in part to vesicle exocytosis. This chain is Sodium-dependent neutral amino acid transporter SLC6A17, found in Bos taurus (Bovine).